The primary structure comprises 298 residues: GTP cyclohydrolase FolE2 (298 aa).

It belongs to the GTP cyclohydrolase IV family.

It catalyses the reaction GTP + H2O = 7,8-dihydroneopterin 3'-triphosphate + formate + H(+). The protein operates within cofactor biosynthesis; 7,8-dihydroneopterin triphosphate biosynthesis; 7,8-dihydroneopterin triphosphate from GTP: step 1/1. Converts GTP to 7,8-dihydroneopterin triphosphate. This chain is GTP cyclohydrolase FolE2, found in Pseudomonas paraeruginosa (strain DSM 24068 / PA7) (Pseudomonas aeruginosa (strain PA7)).